The following is a 375-amino-acid chain: Alcohol dehydrogenase 6 (375 aa).

Positions 47, 69, 99, 102, 105, 113, and 175 each coordinate Zn(2+). Residues 200–205 (GLGGVG), D224, K229, 293–295 (VGS), and R370 each bind NAD(+).

The protein belongs to the zinc-containing alcohol dehydrogenase family. Class-V subfamily. As to quaternary structure, dimer. The cofactor is Zn(2+). As to expression, liver.

Its subcellular location is the cytoplasm. It carries out the reaction a primary alcohol + NAD(+) = an aldehyde + NADH + H(+). The enzyme catalyses a secondary alcohol + NAD(+) = a ketone + NADH + H(+). Functionally, alcohol dehydrogenase. Catalyzes the NAD-dependent oxidation of primary alcohols to the corresponding aldehydes. Oxidizes secondary alcohols to the corresponding ketones. This Peromyscus maniculatus (North American deer mouse) protein is Alcohol dehydrogenase 6 (ADH6).